Here is a 349-residue protein sequence, read N- to C-terminus: Green-sensitive opsin-1 (349 aa).

Residues 1 to 36 (MNGTEGSNFYIPMSNRTGLVRSPYDYTQYYLAEPWK) lie on the Extracellular side of the membrane. 2 N-linked (GlcNAc...) asparagine glycosylation sites follow: N2 and N15. A helical membrane pass occupies residues 37 to 61 (FKALAFYMFLLIIFGFPINVLTLVV). Over 62 to 73 (TAQHKKLRQPLN) the chain is Cytoplasmic. A helical transmembrane segment spans residues 74–99 (YILVNLAFAGTIMVIFGFTVSFYCSL). The Extracellular portion of the chain corresponds to 100 to 113 (VGYMALGPLGCVME). Cysteines 110 and 187 form a disulfide. A helical membrane pass occupies residues 114–133 (GFFATLGGQVALWSLVVLAI). The Cytoplasmic portion of the chain corresponds to 134-152 (ERYIVVCKPMGSFKFSANH). Residues 153–176 (AMAGIAFTWFMACSCAVPPLFGWS) form a helical membrane-spanning segment. The Extracellular portion of the chain corresponds to 177–202 (RYLPEGMQTSCGPDYYTLNPEYNNES). N200 carries an N-linked (GlcNAc...) asparagine glycan. Residues 203 to 230 (YVMYMFSCHFCIPVTTIFFTYGSLVCTV) traverse the membrane as a helical segment. At 231-252 (KAAAAQQQESESTQKAEREVTR) the chain is on the cytoplasmic side. Residues 253–276 (MVILMVLGFLFAWVPYASFAAWIF) form a helical membrane-spanning segment. The Extracellular segment spans residues 277–284 (FNRGAAFS). A helical membrane pass occupies residues 285-309 (AQAMAVPAFFSKTSAVFNPIIYVLL). Residue K296 is modified to N6-(retinylidene)lysine. Residues 310 to 349 (NKQFRSCMLNTLFCGKSPLGDDESSSVSTSKTEVSSVSPA) lie on the Cytoplasmic side of the membrane. The tract at residues 328 to 349 (LGDDESSSVSTSKTEVSSVSPA) is disordered. Residues 334 to 349 (SSVSTSKTEVSSVSPA) show a composition bias toward low complexity.

This sequence belongs to the G-protein coupled receptor 1 family. Opsin subfamily. In terms of processing, phosphorylated on some or all of the serine and threonine residues present in the C-terminal region. Retinal double cone accessory photoreceptor cell outer segments.

The protein localises to the membrane. Its function is as follows. Visual pigments are the light-absorbing molecules that mediate vision. They consist of an apoprotein, opsin, covalently linked to cis-retinal. The sequence is that of Green-sensitive opsin-1 (opn1mw1) from Danio rerio (Zebrafish).